Here is a 185-residue protein sequence, read N- to C-terminus: Ribosome-recycling factor (185 aa).

The interval 136–155 (NDDLKKLEKNGDITEDELRA) is disordered.

The protein belongs to the RRF family.

Its subcellular location is the cytoplasm. Its function is as follows. Responsible for the release of ribosomes from messenger RNA at the termination of protein biosynthesis. May increase the efficiency of translation by recycling ribosomes from one round of translation to another. The polypeptide is Ribosome-recycling factor (Bacillus velezensis (strain DSM 23117 / BGSC 10A6 / LMG 26770 / FZB42) (Bacillus amyloliquefaciens subsp. plantarum)).